A 160-amino-acid polypeptide reads, in one-letter code: Cytochrome b6-f complex subunit 4 (160 aa).

Helical transmembrane passes span 36–56, 95–115, and 131–151; these read LLYM…GLAV, LLGI…PFIE, and AVFL…ALPI.

This sequence belongs to the cytochrome b family. PetD subfamily. As to quaternary structure, the 4 large subunits of the cytochrome b6-f complex are cytochrome b6, subunit IV (17 kDa polypeptide, PetD), cytochrome f and the Rieske protein, while the 4 small subunits are PetG, PetL, PetM and PetN. The complex functions as a dimer.

Its subcellular location is the cellular thylakoid membrane. Its function is as follows. Component of the cytochrome b6-f complex, which mediates electron transfer between photosystem II (PSII) and photosystem I (PSI), cyclic electron flow around PSI, and state transitions. The sequence is that of Cytochrome b6-f complex subunit 4 from Synechococcus elongatus (strain ATCC 33912 / PCC 7942 / FACHB-805) (Anacystis nidulans R2).